The sequence spans 38 residues: Defensin-like peptide 3 (38 aa).

2 disulfide bridges follow: cysteine 6-cysteine 36 and cysteine 13-cysteine 29.

Produced by the crural gland and detected in venom from the spur located on each male hind leg.

The protein resides in the secreted. Does not show antimicrobial, myotoxic, hemolytic and cell-promoting activities. The polypeptide is Defensin-like peptide 3 (Ornithorhynchus anatinus (Duckbill platypus)).